A 68-amino-acid chain; its full sequence is DNA-directed RNA polymerase subunit omega (68 aa).

This sequence belongs to the RNA polymerase subunit omega family. As to quaternary structure, the RNAP catalytic core consists of 2 alpha, 1 beta, 1 beta' and 1 omega subunit. When a sigma factor is associated with the core the holoenzyme is formed, which can initiate transcription.

The enzyme catalyses RNA(n) + a ribonucleoside 5'-triphosphate = RNA(n+1) + diphosphate. Functionally, promotes RNA polymerase assembly. Latches the N- and C-terminal regions of the beta' subunit thereby facilitating its interaction with the beta and alpha subunits. The polypeptide is DNA-directed RNA polymerase subunit omega (Neisseria meningitidis serogroup C (strain 053442)).